The chain runs to 186 residues: Centromere protein M (186 aa).

It is found in the nucleus. Its subcellular location is the chromosome. It localises to the centromere. Functionally, probable component of a centromeric complex involved in assembly of kinetochore proteins, mitotic progression and chromosome segregation. This chain is Centromere protein M (cenpm), found in Danio rerio (Zebrafish).